Consider the following 243-residue polypeptide: Probable phosphatase CBO3379/CLC_3322 (243 aa).

Zn(2+) contacts are provided by histidine 8, histidine 10, histidine 16, histidine 41, glutamate 74, histidine 102, histidine 132, aspartate 192, and histidine 194.

It belongs to the PHP family. It depends on Zn(2+) as a cofactor.

In Clostridium botulinum (strain Hall / ATCC 3502 / NCTC 13319 / Type A), this protein is Probable phosphatase CBO3379/CLC_3322.